The following is a 559-amino-acid chain: 5'-AMP-activated protein kinase catalytic subunit alpha-1 (559 aa).

One can recognise a Protein kinase domain in the interval 27–279 (YILGDTLGVG…IKDIREHEWF (253 aa)). Thr-32 is subject to Phosphothreonine. ATP-binding positions include 33-41 (LGVGTFGKV) and Lys-56. Asp-150 acts as the Proton acceptor in catalysis. Thr-183 carries the post-translational modification Phosphothreonine; by LKB1 and CaMKK2. Phosphothreonine is present on residues Thr-269 and Thr-355. Residues 302–381 (EALKEVCEKF…PERVPFLVAE (80 aa)) form an AIS region. Ser-356 bears the Phosphoserine mark. Ser-360 is subject to Phosphoserine; by ULK1. Thr-368 is modified (phosphothreonine; by ULK1). Thr-382 is modified (phosphothreonine). Ser-397 is subject to Phosphoserine; by ULK1. Phosphoserine occurs at positions 467 and 486. A disordered region spans residues 484-536 (AKSGTATPQRSGSISNYRSCQRSDSDAEAQGKPSEVSLTSSVTSLDSSPVDVA). The span at 485 to 505 (KSGTATPQRSGSISNYRSCQR) shows a compositional bias: polar residues. At Ser-486 the chain carries Phosphoserine; by ULK1. Thr-488 carries the post-translational modification Phosphothreonine; by ULK1. Thr-490 carries the phosphothreonine modification. Phosphoserine occurs at positions 496, 508, 524, and 527. Positions 516-535 (PSEVSLTSSVTSLDSSPVDV) are enriched in low complexity.

It belongs to the protein kinase superfamily. CAMK Ser/Thr protein kinase family. SNF1 subfamily. AMPK is a heterotrimer of an alpha catalytic subunit (PRKAA1 or PRKAA2), a beta (PRKAB1 or PRKAB2) and a gamma non-catalytic subunits (PRKAG1, PRKAG2 or PRKAG3). Interacts with FNIP1 and FNIP2. Requires Mg(2+) as cofactor. Ubiquitinated. Post-translationally, phosphorylated at Thr-183 by STK11/LKB1 in complex with STE20-related adapter-alpha (STRADA) pseudo kinase and CAB39. Also phosphorylated at Thr-183 by CAMKK2; triggered by a rise in intracellular calcium ions, without detectable changes in the AMP/ATP ratio. CAMKK1 can also phosphorylate Thr-183, but at a much lower level. Dephosphorylated by protein phosphatase 2A and 2C (PP2A and PP2C). Phosphorylated by ULK1 and ULK2; leading to negatively regulate AMPK activity and suggesting the existence of a regulatory feedback loop between ULK1, ULK2 and AMPK. There is some ambiguity for some phosphosites: Ser-360/Thr-368 and Ser-486/Thr-488. Dephosphorylated by PPM1A and PPM1B. In terms of processing, glycosylated; O-GlcNAcylated by OGT, promoting the AMP-activated protein kinase (AMPK) activity. In terms of tissue distribution, low expression in kidney, liver, lung, heart and brain.

The protein resides in the cytoplasm. Its subcellular location is the nucleus. It catalyses the reaction L-seryl-[protein] + ATP = O-phospho-L-seryl-[protein] + ADP + H(+). It carries out the reaction L-threonyl-[protein] + ATP = O-phospho-L-threonyl-[protein] + ADP + H(+). The catalysed reaction is L-seryl-[acetyl-CoA carboxylase] + ATP = O-phospho-L-seryl-[acetyl-CoA carboxylase] + ADP + H(+). The enzyme catalyses L-seryl-[3-hydroxy-3-methylglutaryl-coenzyme A reductase] + ATP = O-phospho-L-seryl-[3-hydroxy-3-methylglutaryl-coenzyme A reductase] + ADP + H(+). It catalyses the reaction L-seryl-[tau protein] + ATP = O-phospho-L-seryl-[tau protein] + ADP + H(+). It carries out the reaction L-threonyl-[tau protein] + ATP = O-phospho-L-threonyl-[tau protein] + ADP + H(+). Its activity is regulated as follows. Activated by phosphorylation on Thr-183. Binding of AMP to non-catalytic gamma subunit (PRKAG1, PRKAG2 or PRKAG3) results in allosteric activation, inducing phosphorylation on Thr-183. AMP-binding to gamma subunit also sustains activity by preventing dephosphorylation of Thr-183. ADP also stimulates Thr-183 phosphorylation, without stimulating already phosphorylated AMPK. ATP promotes dephosphorylation of Thr-183, rendering the enzyme inactive. Under physiological conditions AMPK mainly exists in its inactive form in complex with ATP, which is much more abundant than AMP. Selectively inhibited by compound C (6-[4-(2-Piperidin-1-yl-ethoxy)-phenyl)]-3-pyridin-4-yl-pyyrazolo[1,5-a] pyrimidine. Activated by resveratrol, a natural polyphenol present in red wine, and S17834, a synthetic polyphenol. In terms of biological role, catalytic subunit of AMP-activated protein kinase (AMPK), an energy sensor protein kinase that plays a key role in regulating cellular energy metabolism. In response to reduction of intracellular ATP levels, AMPK activates energy-producing pathways and inhibits energy-consuming processes: inhibits protein, carbohydrate and lipid biosynthesis, as well as cell growth and proliferation. AMPK acts via direct phosphorylation of metabolic enzymes, and by longer-term effects via phosphorylation of transcription regulators. Regulates lipid synthesis by phosphorylating and inactivating lipid metabolic enzymes such as ACACA, ACACB, GYS1, HMGCR and LIPE; regulates fatty acid and cholesterol synthesis by phosphorylating acetyl-CoA carboxylase (ACACA and ACACB) and hormone-sensitive lipase (LIPE) enzymes, respectively. Promotes lipolysis of lipid droplets by mediating phosphorylation of isoform 1 of CHKA (CHKalpha2). Regulates insulin-signaling and glycolysis by phosphorylating IRS1, PFKFB2 and PFKFB3. AMPK stimulates glucose uptake in muscle by increasing the translocation of the glucose transporter SLC2A4/GLUT4 to the plasma membrane, possibly by mediating phosphorylation of TBC1D4/AS160. Regulates transcription and chromatin structure by phosphorylating transcription regulators involved in energy metabolism such as CRTC2/TORC2, FOXO3, histone H2B, HDAC5, MEF2C, MLXIPL/ChREBP, EP300, HNF4A, p53/TP53, SREBF1, SREBF2 and PPARGC1A. Acts as a key regulator of glucose homeostasis in liver by phosphorylating CRTC2/TORC2, leading to CRTC2/TORC2 sequestration in the cytoplasm. In response to stress, phosphorylates 'Ser-36' of histone H2B (H2BS36ph), leading to promote transcription. Acts as a key regulator of cell growth and proliferation by phosphorylating FNIP1, TSC2, RPTOR, WDR24 and ATG1/ULK1: in response to nutrient limitation, negatively regulates the mTORC1 complex by phosphorylating RPTOR component of the mTORC1 complex and by phosphorylating and activating TSC2. Also phosphorylates and inhibits GATOR2 subunit WDR24 in response to nutrient limitation, leading to suppress glucose-mediated mTORC1 activation. In response to energetic stress, phosphorylates FNIP1, inactivating the non-canonical mTORC1 signaling, thereby promoting nuclear translocation of TFEB and TFE3, and inducing transcription of lysosomal or autophagy genes. In response to nutrient limitation, promotes autophagy by phosphorylating and activating ATG1/ULK1. In that process, it also activates WDR45/WIPI4. Phosphorylates CASP6, thereby preventing its autoprocessing and subsequent activation. In response to nutrient limitation, phosphorylates transcription factor FOXO3 promoting FOXO3 mitochondrial import. Also acts as a regulator of cellular polarity by remodeling the actin cytoskeleton; probably by indirectly activating myosin. AMPK also acts as a regulator of circadian rhythm by mediating phosphorylation of CRY1, leading to destabilize it. May regulate the Wnt signaling pathway by phosphorylating CTNNB1, leading to stabilize it. Also has tau-protein kinase activity: in response to amyloid beta A4 protein (APP) exposure, activated by CAMKK2, leading to phosphorylation of MAPT/TAU; however the relevance of such data remains unclear in vivo. Also phosphorylates CFTR, EEF2K, KLC1, NOS3 and SLC12A1. Regulates hepatic lipogenesis. Activated via SIRT3, represses sterol regulatory element-binding protein (SREBP) transcriptional activities and ATP-consuming lipogenesis to restore cellular energy balance. Upon stress, regulates mitochondrial fragmentation through phosphorylation of MTFR1L. This chain is 5'-AMP-activated protein kinase catalytic subunit alpha-1 (Prkaa1), found in Rattus norvegicus (Rat).